The primary structure comprises 172 residues: Small ribosomal subunit protein bS16 (172 aa).

The interval 125–172 (KKRKAKEEAEAKAAAEKAAEEAAAAEAAKAEEEAAKAEEADSAEESAE) is disordered. 2 stretches are compositionally biased toward basic and acidic residues: residues 129–144 (AKEE…KAAE) and 152–163 (AKAEEEAAKAEE).

This sequence belongs to the bacterial ribosomal protein bS16 family.

The sequence is that of Small ribosomal subunit protein bS16 from Corynebacterium aurimucosum (strain ATCC 700975 / DSM 44827 / CIP 107346 / CN-1) (Corynebacterium nigricans).